A 334-amino-acid polypeptide reads, in one-letter code: NH(3)-dependent NAD(+) synthetase (334 aa).

ATP is bound at residue 47–54 (GLSGGIDS). D53 is a Mg(2+) binding site. Residue R183 coordinates deamido-NAD(+). T203 contacts ATP. Position 208 (E208) interacts with Mg(2+). K216 and D223 together coordinate deamido-NAD(+). K232 and T254 together coordinate ATP.

It belongs to the NAD synthetase family. As to quaternary structure, homodimer.

The enzyme catalyses deamido-NAD(+) + NH4(+) + ATP = AMP + diphosphate + NAD(+) + H(+). Its pathway is cofactor biosynthesis; NAD(+) biosynthesis; NAD(+) from deamido-NAD(+) (ammonia route): step 1/1. In terms of biological role, catalyzes the ATP-dependent amidation of deamido-NAD to form NAD. Uses ammonia as a nitrogen source. This chain is NH(3)-dependent NAD(+) synthetase, found in Rhizobium meliloti (strain 1021) (Ensifer meliloti).